We begin with the raw amino-acid sequence, 308 residues long: MAAARISFSSTSRTSYYRHSPFLGPKPTPTTPSVYPITPFSPNLGSILRCRRRPSFTVCFVLEDDKFKTQFEAGEEDIEMKIEEQISATRLAEKLARKKSERFTYLVAAVMSSFGITSMAVMAVYYRFYWQMEGGEVPFSEMFGTFALSVGAAVGMEFWARWAHKALWHASLWHMHESHHKPREGPFELNDVFAIINAVPAIALLDYGFFHKGLIPGLCFGAGLGITVFGMAYMFVHDGLVHKRFPVGPVANVPYLRKVAAAHSLHHSEKFNGVPYGLFLGPKELEEVGGLEELEKEVNRRTRYIKGS.

A chloroplast-targeting transit peptide spans 1–59 (MAAARISFSSTSRTSYYRHSPFLGPKPTPTTPSVYPITPFSPNLGSILRCRRRPSFTVC). 2 helical membrane-spanning segments follow: residues 105–125 (YLVAAVMSSFGITSMAVMAVY) and 139–159 (FSEMFGTFALSVGAAVGMEFW). The 128-residue stretch at 152-279 (AAVGMEFWAR…KFNGVPYGLF (128 aa)) folds into the Fatty acid hydroxylase domain. Residues 164 to 169 (HKALWH) carry the Histidine box-1 motif. Residues 176–180 (HESHH) carry the Histidine box-2 motif. Helical transmembrane passes span 191 to 211 (DVFAIINAVPAIALLDYGFFH) and 215 to 235 (IPGLCFGAGLGITVFGMAYMF). Residues 237-242 (HDGLVH) carry the Histidine box-3 motif. Residues 263–267 (HSLHH) carry the Histidine box-4 motif.

Belongs to the sterol desaturase family.

Its subcellular location is the plastid. It localises to the chloroplast membrane. It carries out the reaction all-trans-beta-carotene + 4 reduced [2Fe-2S]-[ferredoxin] + 2 O2 + 4 H(+) = all-trans-zeaxanthin + 4 oxidized [2Fe-2S]-[ferredoxin] + 2 H2O. The catalysed reaction is all-trans-beta-carotene + 2 reduced [2Fe-2S]-[ferredoxin] + O2 + 2 H(+) = beta-cryptoxanthin + 2 oxidized [2Fe-2S]-[ferredoxin] + H2O. It catalyses the reaction beta-cryptoxanthin + 2 reduced [2Fe-2S]-[ferredoxin] + O2 + 2 H(+) = all-trans-zeaxanthin + 2 oxidized [2Fe-2S]-[ferredoxin] + H2O. With respect to regulation, inhibited by o-phenanthroline and 8-hydroxyquinoline. Functionally, nonheme diiron monooxygenase involved in the biosynthesis of xanthophylls. Specific for beta-ring hydroxylations of beta-carotene. Produces beta-cryptoxanthin and zeaxanthin. Uses ferredoxin as an electron donor. The protein is Beta-carotene hydroxylase 2, chloroplastic of Capsicum annuum (Capsicum pepper).